Consider the following 582-residue polypeptide: Leucine-rich repeat transmembrane neuronal protein 3 (582 aa).

The N-terminal stretch at 1-30 is a signal peptide; the sequence is MGFNVIRLLRGSAVAVVLAPTVLLTMLSSA. Positions 31-61 constitute an LRRNT domain; it reads ERGCPKGCRCEGKMVYCESQKLQEIPSSISA. Residues 31–420 are Extracellular-facing; that stretch reads ERGCPKGCRC…VDTEHISFHK (390 aa). LRR repeat units follow at residues 63–83, 86–107, 110–131, 134–155, 158–179, 182–203, 206–226, 230–251, 254–275, and 279–300; these read CLGL…QFKG, QLTW…AFNG, RLKE…TFRP, NLRN…QFRG, KLLS…IFQD, NLEL…VFAG, RLKE…ALFP, SLQN…MSWT, SLQR…SVFQ, and NLQR…ILDS. An N-linked (GlcNAc...) asparagine glycan is attached at Asn126. In terms of domain architecture, LRRCT spans 312-363; that stretch reads NIWECSRNICSLVNWLRSFKGLRENTIICASPKELQGVNVIDAVKNYSICGK. N-linked (GlcNAc...) asparagine glycosylation occurs at Asn357. Residues 378–410 form a disordered region; it reads KPTFKPKLPRPKHESKPPLPPTVGATEPSPETD. Residues 421–441 form a helical membrane-spanning segment; it reads IIAGSVALFLSVLVILLVMYV. The Cytoplasmic segment spans residues 442 to 582; that stretch reads SWKRYPASMK…RISDHKPQLA (141 aa).

This sequence belongs to the LRRTM family. In terms of tissue distribution, expressed in neuronal tissues.

It is found in the cell membrane. Its subcellular location is the postsynaptic cell membrane. In terms of biological role, may play a role in the development and maintenance of the vertebrate nervous system. Exhibits a limited synaptogenic activity in vitro, restricted to excitatory presynaptic differentiation. The polypeptide is Leucine-rich repeat transmembrane neuronal protein 3 (Lrrtm3) (Mus musculus (Mouse)).